Reading from the N-terminus, the 171-residue chain is S-ribosylhomocysteine lyase (171 aa).

The Fe cation site is built by His54, His58, and Cys128.

It belongs to the LuxS family. Homodimer. It depends on Fe cation as a cofactor.

The catalysed reaction is S-(5-deoxy-D-ribos-5-yl)-L-homocysteine = (S)-4,5-dihydroxypentane-2,3-dione + L-homocysteine. Its function is as follows. Involved in the synthesis of autoinducer 2 (AI-2) which is secreted by bacteria and is used to communicate both the cell density and the metabolic potential of the environment. The regulation of gene expression in response to changes in cell density is called quorum sensing. Catalyzes the transformation of S-ribosylhomocysteine (RHC) to homocysteine (HC) and 4,5-dihydroxy-2,3-pentadione (DPD). The polypeptide is S-ribosylhomocysteine lyase (Proteus mirabilis (strain HI4320)).